The sequence spans 46 residues: Probable butyrate kinase (46 aa).

The protein belongs to the acetokinase family.

The protein localises to the cytoplasm. It carries out the reaction butanoate + ATP = butanoyl phosphate + ADP. This Geobacillus stearothermophilus (Bacillus stearothermophilus) protein is Probable butyrate kinase (buk).